The following is a 288-amino-acid chain: S-methyl-5'-thioadenosine phosphorylase (288 aa).

Residues serine 12, 54–55 (RH), and 87–88 (SA) contribute to the phosphate site. A substrate-binding site is contributed by methionine 186. Phosphate is bound at residue threonine 187. 210–212 (DYD) is a substrate binding site.

This sequence belongs to the PNP/MTAP phosphorylase family. MTAP subfamily. Homohexamer. Dimer of a homotrimer.

The enzyme catalyses S-methyl-5'-thioadenosine + phosphate = 5-(methylsulfanyl)-alpha-D-ribose 1-phosphate + adenine. Its pathway is amino-acid biosynthesis; L-methionine biosynthesis via salvage pathway; S-methyl-5-thio-alpha-D-ribose 1-phosphate from S-methyl-5'-thioadenosine (phosphorylase route): step 1/1. Catalyzes the reversible phosphorylation of S-methyl-5'-thioadenosine (MTA) to adenine and 5-methylthioribose-1-phosphate. Involved in the breakdown of MTA, a major by-product of polyamine biosynthesis. Responsible for the first step in the methionine salvage pathway after MTA has been generated from S-adenosylmethionine. Has broad substrate specificity with 6-aminopurine nucleosides as preferred substrates. The polypeptide is S-methyl-5'-thioadenosine phosphorylase (Chloroflexus aurantiacus (strain ATCC 29366 / DSM 635 / J-10-fl)).